A 323-amino-acid polypeptide reads, in one-letter code: NAC transcription factor 25 (323 aa).

Residues 16–177 (LPPGFRFHPT…DWVLCRIYKK (162 aa)) enclose the NAC domain. Residues 114 to 183 (VGVKKALVFY…IYKKNSSQRP (70 aa)) mediate DNA binding. A compositionally biased stretch (low complexity) spans 201–221 (KSSANSSSTSVLDNNDNNNNN). Residues 201–223 (KSSANSSSTSVLDNNDNNNNNNE) form a disordered region.

Expressed specifically in the tapetum.

It localises to the nucleus. In terms of biological role, transcription factor of the NAC family. May be associated with anther development and pollen production. Required for normal seed development and morphology. The polypeptide is NAC transcription factor 25 (NAC025) (Arabidopsis thaliana (Mouse-ear cress)).